A 955-amino-acid polypeptide reads, in one-letter code: Protein translocase subunit SecA (955 aa).

ATP-binding positions include glutamine 90, 108–112 (GEGKT), and aspartate 509. A disordered region spans residues 537–571 (EGHRPPVPLQRSGAEGGGGFAAKAAPASGPHGHAP). The span at 557–571 (AAKAAPASGPHGHAP) shows a compositional bias: low complexity.

Belongs to the SecA family. In terms of assembly, monomer and homodimer. Part of the essential Sec protein translocation apparatus which comprises SecA, SecYEG and auxiliary proteins SecDF. Other proteins may also be involved.

It localises to the cell inner membrane. Its subcellular location is the cellular thylakoid membrane. The protein localises to the cytoplasm. The catalysed reaction is ATP + H2O + cellular proteinSide 1 = ADP + phosphate + cellular proteinSide 2.. Functionally, part of the Sec protein translocase complex. Interacts with the SecYEG preprotein conducting channel. Has a central role in coupling the hydrolysis of ATP to the transfer of proteins into and across the cell membrane, serving as an ATP-driven molecular motor driving the stepwise translocation of polypeptide chains across the membrane. Its function is as follows. Probably participates in protein translocation into and across both the cytoplasmic and thylakoid membranes in cyanobacterial cells. This chain is Protein translocase subunit SecA, found in Synechococcus sp. (strain WH7803).